We begin with the raw amino-acid sequence, 483 residues long: Proline--tRNA ligase (483 aa).

The protein belongs to the class-II aminoacyl-tRNA synthetase family. ProS type 3 subfamily. As to quaternary structure, homodimer.

It is found in the cytoplasm. The enzyme catalyses tRNA(Pro) + L-proline + ATP = L-prolyl-tRNA(Pro) + AMP + diphosphate. Its function is as follows. Catalyzes the attachment of proline to tRNA(Pro) in a two-step reaction: proline is first activated by ATP to form Pro-AMP and then transferred to the acceptor end of tRNA(Pro). This is Proline--tRNA ligase from Mycoplasma pneumoniae (strain ATCC 29342 / M129 / Subtype 1) (Mycoplasmoides pneumoniae).